We begin with the raw amino-acid sequence, 491 residues long: Glutamyl-tRNA(Gln) amidotransferase subunit A (491 aa).

Residues lysine 76 and serine 154 each act as charge relay system in the active site. Serine 178 acts as the Acyl-ester intermediate in catalysis.

The protein belongs to the amidase family. GatA subfamily. Heterotrimer of A, B and C subunits.

The enzyme catalyses L-glutamyl-tRNA(Gln) + L-glutamine + ATP + H2O = L-glutaminyl-tRNA(Gln) + L-glutamate + ADP + phosphate + H(+). In terms of biological role, allows the formation of correctly charged Gln-tRNA(Gln) through the transamidation of misacylated Glu-tRNA(Gln) in organisms which lack glutaminyl-tRNA synthetase. The reaction takes place in the presence of glutamine and ATP through an activated gamma-phospho-Glu-tRNA(Gln). In Cereibacter sphaeroides (strain ATCC 17029 / ATH 2.4.9) (Rhodobacter sphaeroides), this protein is Glutamyl-tRNA(Gln) amidotransferase subunit A.